The chain runs to 195 residues: Glutathione S-transferase class-mu 26 kDa isozyme (195 aa).

A GST N-terminal domain is found at 1–83; that stretch reads MAPKLGYWKI…YIADKHNMLG (83 aa). Glutathione is bound by residues 7-8, 41-45, 54-55, and 67-68; these read YW, WRNEK, NL, and QS. The 111-residue stretch at 85–195 folds into the GST C-terminal domain; it reads CPKERAEISM…TFGGGDAPPK (111 aa). Tyrosine 111 is a substrate binding site.

The protein belongs to the GST superfamily. Mu family. Homodimer.

The catalysed reaction is RX + glutathione = an S-substituted glutathione + a halide anion + H(+). Functionally, conjugation of reduced glutathione to a wide number of exogenous and endogenous hydrophobic electrophiles. GST isoenzymes appear to play a central role in the parasite detoxification system. Other functions are also suspected including a role in increasing the solubility of haematin in the parasite gut. The chain is Glutathione S-transferase class-mu 26 kDa isozyme from Schistosoma mansoni (Blood fluke).